The sequence spans 197 residues: 3-isopropylmalate dehydratase small subunit (197 aa).

The protein belongs to the LeuD family. LeuD type 1 subfamily. Heterodimer of LeuC and LeuD.

It catalyses the reaction (2R,3S)-3-isopropylmalate = (2S)-2-isopropylmalate. Its pathway is amino-acid biosynthesis; L-leucine biosynthesis; L-leucine from 3-methyl-2-oxobutanoate: step 2/4. Its function is as follows. Catalyzes the isomerization between 2-isopropylmalate and 3-isopropylmalate, via the formation of 2-isopropylmaleate. The sequence is that of 3-isopropylmalate dehydratase small subunit from Corynebacterium glutamicum (strain R).